A 334-amino-acid chain; its full sequence is D-fructose 1,6-bisphosphatase class 2/sedoheptulose 1,7-bisphosphatase (334 aa).

Mn(2+) is bound by residues Asp-33, Glu-57, Asp-85, and Glu-88. Substrate-binding positions include 88 to 90 (EGT), Tyr-119, 164 to 166 (RAR), and 186 to 188 (DGD). Glu-213 serves as a coordination point for Mn(2+).

The protein belongs to the FBPase class 2 family. As to quaternary structure, homotetramer. Mn(2+) is required as a cofactor.

The enzyme catalyses beta-D-fructose 1,6-bisphosphate + H2O = beta-D-fructose 6-phosphate + phosphate. The catalysed reaction is D-sedoheptulose 1,7-bisphosphate + H2O = D-sedoheptulose 7-phosphate + phosphate. It participates in carbohydrate biosynthesis; Calvin cycle. Catalyzes the hydrolysis of fructose 1,6-bisphosphate (Fru 1,6-P2) and sedoheptulose 1,7-bisphosphate (Sed 1,7-P2) to fructose 6-phosphate and sedoheptulose 7-phosphate, respectively. The protein is D-fructose 1,6-bisphosphatase class 2/sedoheptulose 1,7-bisphosphatase of Synechococcus sp. (strain CC9605).